Here is a 153-residue protein sequence, read N- to C-terminus: ATP synthase subunit b' (153 aa).

The chain crosses the membrane as a helical span at residues 23–40; the sequence is LMAIQVVALTYILNSLFF.

It belongs to the ATPase B chain family. In terms of assembly, F-type ATPases have 2 components, F(1) - the catalytic core - and F(0) - the membrane proton channel. F(1) has five subunits: alpha(3), beta(3), gamma(1), delta(1), epsilon(1). F(0) has four main subunits: a(1), b(1), b'(1) and c(10-14). The alpha and beta chains form an alternating ring which encloses part of the gamma chain. F(1) is attached to F(0) by a central stalk formed by the gamma and epsilon chains, while a peripheral stalk is formed by the delta, b and b' chains.

It localises to the cellular thylakoid membrane. Functionally, f(1)F(0) ATP synthase produces ATP from ADP in the presence of a proton or sodium gradient. F-type ATPases consist of two structural domains, F(1) containing the extramembraneous catalytic core and F(0) containing the membrane proton channel, linked together by a central stalk and a peripheral stalk. During catalysis, ATP synthesis in the catalytic domain of F(1) is coupled via a rotary mechanism of the central stalk subunits to proton translocation. Its function is as follows. Component of the F(0) channel, it forms part of the peripheral stalk, linking F(1) to F(0). The b'-subunit is a diverged and duplicated form of b found in plants and photosynthetic bacteria. This is ATP synthase subunit b' from Prochlorococcus marinus (strain MIT 9301).